The sequence spans 101 residues: 2-amino-4-ketopentanoate thiolase alpha subunit (101 aa).

It belongs to the OrtA family. In terms of assembly, heterodimer with OrtB.

It catalyses the reaction D-alanine + acetyl-CoA = (2R)-2-amino-4-oxopentanoate + CoA. Its function is as follows. Involved in the ornithine fermentation pathway. Catalyzes the thiolytic cleavage of 2-amino-4-ketopentanoate (AKP) with coenzyme A (CoA) to form acetyl-CoA and alanine. It is strictly specific for AKP. In Unknown prokaryotic organism, this protein is 2-amino-4-ketopentanoate thiolase alpha subunit.